Here is a 612-residue protein sequence, read N- to C-terminus: Dihydroxy-acid dehydratase (612 aa).

Asp81 serves as a coordination point for Mg(2+). Cys122 lines the [2Fe-2S] cluster pocket. Positions 123 and 124 each coordinate Mg(2+). Lys124 carries the post-translational modification N6-carboxylysine. Cys195 lines the [2Fe-2S] cluster pocket. Position 491 (Glu491) interacts with Mg(2+). Ser517 serves as the catalytic Proton acceptor.

Belongs to the IlvD/Edd family. In terms of assembly, homodimer. [2Fe-2S] cluster is required as a cofactor. Requires Mg(2+) as cofactor.

The catalysed reaction is (2R)-2,3-dihydroxy-3-methylbutanoate = 3-methyl-2-oxobutanoate + H2O. It carries out the reaction (2R,3R)-2,3-dihydroxy-3-methylpentanoate = (S)-3-methyl-2-oxopentanoate + H2O. It functions in the pathway amino-acid biosynthesis; L-isoleucine biosynthesis; L-isoleucine from 2-oxobutanoate: step 3/4. It participates in amino-acid biosynthesis; L-valine biosynthesis; L-valine from pyruvate: step 3/4. Functionally, functions in the biosynthesis of branched-chain amino acids. Catalyzes the dehydration of (2R,3R)-2,3-dihydroxy-3-methylpentanoate (2,3-dihydroxy-3-methylvalerate) into 2-oxo-3-methylpentanoate (2-oxo-3-methylvalerate) and of (2R)-2,3-dihydroxy-3-methylbutanoate (2,3-dihydroxyisovalerate) into 2-oxo-3-methylbutanoate (2-oxoisovalerate), the penultimate precursor to L-isoleucine and L-valine, respectively. The protein is Dihydroxy-acid dehydratase of Rhizobium johnstonii (strain DSM 114642 / LMG 32736 / 3841) (Rhizobium leguminosarum bv. viciae).